Reading from the N-terminus, the 645-residue chain is Zinc finger protein 64 (645 aa).

C2H2-type zinc fingers lie at residues 175-197 (HKCEVCGKCFSRKDKLKTHMRCH), 203-225 (YKCKTCDYAAADSSSLNKHLRIH), and 231-253 (FKCQICPYASRNSSQLTVHLRSH). A Glycyl lysine isopeptide (Lys-Gly) (interchain with G-Cter in SUMO2) cross-link involves residue E286. The C2H2-type 4; atypical zinc-finger motif lies at 299–324 (FNCCYPGCHFKTVHGMKDLDRHLRIH). C2H2-type zinc fingers lie at residues 330–352 (HKCEFCDKCFSRKDNLTMHMRCH), 358–380 (HKCHLCDYAAVDSSSLKKHLRIH), 386–408 (YKCQLCPYASRNSSQLTVHLRSH), 414–436 (FQCWLCSAKFKISSDLKRHMIVH), 442–465 (FKCEFCDVRCTMKANLKSHIRIKH), 467–489 (FKCLHCAFQGRDRADLLEHSRLH), 495–517 (EKCPECSYSCSSAAALRVHSRVH), 523–546 (FKCDFCSFDTKRPSSLAKHVDKVH), and 580–602 (FRCETCGASFVRDDSLRCHKKQH). N397 is covalently cross-linked (Glycyl lysine isopeptide (Lys-Gly) (interchain with G-Cter in SUMO2)). Composition is skewed to basic and acidic residues over residues 543–554 (DKVHRDEAKTEN) and 600–610 (KQHSDQSENKN). Disordered stretches follow at residues 543–567 (DKVHRDEAKTENRAPLGKEGLREGS) and 600–645 (KQHS…SQDL). V545 carries the post-translational modification Phosphoserine. Positions 622–631 (ASGQLSTLVS) are enriched in polar residues.

Belongs to the krueppel C2H2-type zinc-finger protein family. Interacts with ZNF70; this interaction promote the transactivation of the HES1 gene. Interacts with NOTCH1.

Its subcellular location is the nucleus. In terms of biological role, may be involved in the regulation of mesenchymal cell differentiation through transactivation of NOTCH1 target genes. The polypeptide is Zinc finger protein 64 (Homo sapiens (Human)).